The following is a 167-amino-acid chain: MRTLVIEPLSKEAFAPFGDVIETDGSDHFMINNGSTMRFHRLATVETAQPEDQAIISIFRADALDMPLTIRMLERHPLGSQAFIPLLGNPFLIVVAPLGDEPVSGLVRAFVSNGRQGINYHRGVWHHPVLTIEKRDDFLVVDRSGTGNNCDEHFFKEDERLILAPHQ.

The protein belongs to the ureidoglycolate lyase family. As to quaternary structure, homodimer. Requires Ni(2+) as cofactor.

The enzyme catalyses (S)-ureidoglycolate = urea + glyoxylate. The protein operates within nitrogen metabolism; (S)-allantoin degradation. Catalyzes the catabolism of the allantoin degradation intermediate (S)-ureidoglycolate, generating urea and glyoxylate. Involved in the utilization of allantoin as nitrogen source. This is Ureidoglycolate lyase from Pseudomonas fluorescens (strain ATCC BAA-477 / NRRL B-23932 / Pf-5).